Consider the following 96-residue polypeptide: Co-chaperonin GroES (96 aa).

This sequence belongs to the GroES chaperonin family. As to quaternary structure, heptamer of 7 subunits arranged in a ring. Interacts with the chaperonin GroEL.

It is found in the cytoplasm. Functionally, together with the chaperonin GroEL, plays an essential role in assisting protein folding. The GroEL-GroES system forms a nano-cage that allows encapsulation of the non-native substrate proteins and provides a physical environment optimized to promote and accelerate protein folding. GroES binds to the apical surface of the GroEL ring, thereby capping the opening of the GroEL channel. The sequence is that of Co-chaperonin GroES from Wolbachia sp. subsp. Brugia malayi (strain TRS).